Here is a 352-residue protein sequence, read N- to C-terminus: MSNTTSALPSSVPAVSLDPNATLCQDWEQSHHLLFHLANLSLGLGFLIPTTLALHMIFLRLLLMTGCSLFIAWATLYRCTLDVMVWNVVFLLVNFMHFFFLLYKRRPIKIDRELKSVYKRMFEPLHVREALFQRLTGQFCTIQTLKKGQVYAAEDKTSVDERLSILLKGKMKVSYRGHFLHNIYTNAFIDSPEFRSTQMNRGERFQVTIAAEENCKLLCWSRERLTYFLESESFLNEVFRYLIGKDITNKLYSLNDPTLSDKAVKKMDRQPSLCSQLSMMQMRNSMASTSDTDDVLNQILRGGSTGSSLQKNPLTKTSTTMKPIEEGLEDDVFESESPTTSQNVSKTTKKDI.

Topologically, residues 1–38 are extracellular; that stretch reads MSNTTSALPSSVPAVSLDPNATLCQDWEQSHHLLFHLA. 2 N-linked (GlcNAc...) asparagine glycosylation sites follow: Asn3 and Asn20. The helical transmembrane segment at 39-59 threads the bilayer; it reads NLSLGLGFLIPTTLALHMIFL. A topological domain (cytoplasmic) is located at residue Arg60. Residues 61 to 81 form a helical membrane-spanning segment; sequence LLLMTGCSLFIAWATLYRCTL. Position 82 (Asp82) is a topological domain, extracellular. A helical transmembrane segment spans residues 83–103; that stretch reads VMVWNVVFLLVNFMHFFFLLY. Topologically, residues 104–352 are cytoplasmic; it reads KRRPIKIDRE…NVSKTTKKDI (249 aa). Residues 299 to 352 form a disordered region; that stretch reads ILRGGSTGSSLQKNPLTKTSTTMKPIEEGLEDDVFESESPTTSQNVSKTTKKDI. Polar residues-rich tracts occupy residues 306–321 and 336–346; these read GSSLQKNPLTKTSTTM and ESPTTSQNVSK.

The protein belongs to the popeye family. Expressed in skeletal muscle (at protein level).

It localises to the lateral cell membrane. Its subcellular location is the cell junction. The protein localises to the tight junction. It is found in the membrane. The protein resides in the cell membrane. It localises to the sarcolemma. Its subcellular location is the caveola. Functionally, cell adhesion molecule involved in the establishment and/or maintenance of cell integrity. Involved in skeletal muscle and heart development as well as in the maintenance of heart function. May play a role in vamp3-mediated vesicular transport and recycling of receptor molecules. Involved in the formation and regulation of the tight junction (TJ) paracellular permeability barrier in epithelial cells. May induce primordial adhesive contact and aggregation of epithelial cells in a Ca(2+)-independent manner. May be involved in epithelial movement during corneal sheet formation and regeneration. May play a role in the regulation of cell shape and movement by modulating the Rho-GTPase activity. May also be involved in striated muscle regeneration and in the regulation of cell spreading. The sequence is that of Popeye domain-containing protein 1 (popdc1) from Danio rerio (Zebrafish).